Here is a 293-residue protein sequence, read N- to C-terminus: uncharacterized protein (293 aa).

It belongs to the TolB family.

This is an uncharacterized protein from Agrobacterium fabrum (strain C58 / ATCC 33970) (Agrobacterium tumefaciens (strain C58)).